We begin with the raw amino-acid sequence, 339 residues long: DNA-directed RNA polymerase subunit alpha (339 aa).

The alpha N-terminal domain (alpha-NTD) stretch occupies residues 1–235; it reads MTIQKNWQEL…DQLNVFVNFE (235 aa). The segment at 251–339 is alpha C-terminal domain (alpha-CTD); that stretch reads FNPAFLKKVD…ELAKRFEDHY (89 aa).

The protein belongs to the RNA polymerase alpha chain family. As to quaternary structure, homodimer. The RNAP catalytic core consists of 2 alpha, 1 beta, 1 beta' and 1 omega subunit. When a sigma factor is associated with the core the holoenzyme is formed, which can initiate transcription.

The enzyme catalyses RNA(n) + a ribonucleoside 5'-triphosphate = RNA(n+1) + diphosphate. Functionally, DNA-dependent RNA polymerase catalyzes the transcription of DNA into RNA using the four ribonucleoside triphosphates as substrates. This Rhodopseudomonas palustris (strain HaA2) protein is DNA-directed RNA polymerase subunit alpha.